The primary structure comprises 55 residues: Large ribosomal subunit protein bL33B (55 aa).

The protein belongs to the bacterial ribosomal protein bL33 family.

This is Large ribosomal subunit protein bL33B from Mycolicibacterium paratuberculosis (strain ATCC BAA-968 / K-10) (Mycobacterium paratuberculosis).